The sequence spans 553 residues: Membrane protein insertase YidC (553 aa).

Residues 6–26 form a helical membrane-spanning segment; that stretch reads LIALVLSLLVLVFWEMYFGLF. The disordered stretch occupies residues 34–59; that stretch reads NKTEQAAPTTTQPATPQTVPPQAATP. The segment covering 38–59 has biased composition (low complexity); the sequence is QAAPTTTQPATPQTVPPQAATP. Transmembrane regions (helical) follow at residues 331–351, 360–380, 424–444, 477–497, and 512–532; these read LASAVDYGWFTFIAKPLVYVL, NWGVAIILLTIVIKILFWPLT, VNPMGGCLPMLLQIPVFFALY, IPYLGGLPVLTLLMGITMFIQ, and IMMIMPVMFTVFFVNFPSGLV.

Belongs to the OXA1/ALB3/YidC family. Type 1 subfamily. As to quaternary structure, interacts with the Sec translocase complex via SecD. Specifically interacts with transmembrane segments of nascent integral membrane proteins during membrane integration.

The protein localises to the cell inner membrane. In terms of biological role, required for the insertion and/or proper folding and/or complex formation of integral membrane proteins into the membrane. Involved in integration of membrane proteins that insert both dependently and independently of the Sec translocase complex, as well as at least some lipoproteins. Aids folding of multispanning membrane proteins. In Syntrophobacter fumaroxidans (strain DSM 10017 / MPOB), this protein is Membrane protein insertase YidC.